Consider the following 350-residue polypeptide: MTVSPVALRRKTECKPHPTARYWKKCDVEALFGLPFLDLIYQAAEIHRQNFNPREIQLSTLLSIKTGGCPEDCAYCPQSAHHNTNLGKEQMMDVDEIVEKAKIAKSRGASRFCMGAAWRGPKPKDVETVSAIIKAVKGLGMETCGTFGMLEEGMAEDLKEAGLDYYNHNLDTDPDRYNDIIHTRQHEDRMDTLGKVRNAGLKVCCGGIVGMNETRAERAGLIASLANLDPQPESVPINRLVKVEGTPLADAEDLDWTEFVRTIAVARITMPQSYVRLSAGRSNMPEAMQAMCFMAGANSIFYGDKLLTTGNPDEDGDRILMEKLNLYPLQFEPEGEVAEVEKASGIKVDY.

In terms of domain architecture, Radical SAM core spans 54–278; it reads REIQLSTLLS…TMPQSYVRLS (225 aa). Residues C69, C73, and C76 each coordinate [4Fe-4S] cluster. Positions 113, 144, 204, and 276 each coordinate [2Fe-2S] cluster.

It belongs to the radical SAM superfamily. Biotin synthase family. As to quaternary structure, homodimer. [4Fe-4S] cluster serves as cofactor. The cofactor is [2Fe-2S] cluster.

The enzyme catalyses (4R,5S)-dethiobiotin + (sulfur carrier)-SH + 2 reduced [2Fe-2S]-[ferredoxin] + 2 S-adenosyl-L-methionine = (sulfur carrier)-H + biotin + 2 5'-deoxyadenosine + 2 L-methionine + 2 oxidized [2Fe-2S]-[ferredoxin]. Its pathway is cofactor biosynthesis; biotin biosynthesis; biotin from 7,8-diaminononanoate: step 2/2. In terms of biological role, catalyzes the conversion of dethiobiotin (DTB) to biotin by the insertion of a sulfur atom into dethiobiotin via a radical-based mechanism. This is Biotin synthase from Neisseria meningitidis serogroup B (strain ATCC BAA-335 / MC58).